Here is a 2283-residue protein sequence, read N- to C-terminus: DNA polymerase epsilon catalytic subunit A (2283 aa).

Positions 1–32 (MVLRNSGRRHPEPGADGEGSRDDGPSSSVSAL) are disordered. Positions 9-24 (RHPEPGADGEGSRDDG) are enriched in basic and acidic residues. Serine 1184, serine 1296, and serine 1316 each carry phosphoserine. 2 disordered regions span residues 1935–1968 (GQVK…GESE) and 2014–2041 (HSAP…TGSL). Basic and acidic residues predominate over residues 1936–1946 (QVKEQDSQARE). Residues 1947–1968 (ETDEEEEDKEKDEEEEGMGESE) show a composition bias toward acidic residues. The span at 2028 to 2037 (SQFSQESEGA) shows a compositional bias: polar residues. Positions 2155, 2158, 2184, and 2187 each coordinate Zn(2+). A CysA-type zinc finger spans residues 2155–2187 (CHSCNFCRDLDLCKDSSFSQDGAILPQWLCSNC). Residues cysteine 2218, cysteine 2221, cysteine 2233, and cysteine 2235 each contribute to the [4Fe-4S] cluster site. The CysB motif signature appears at 2218 to 2235 (CLKCRGMKETHMPVYCSC).

Belongs to the DNA polymerase type-B family. As to quaternary structure, component of the DNA polymerase epsilon complex consisting of four subunits: the catalytic subunit POLE and the accessory subunits POLE2, POLE3 and POLE4. Interacts with RAD17 and TOPBP1. Requires [4Fe-4S] cluster as cofactor.

Its subcellular location is the nucleus. The enzyme catalyses DNA(n) + a 2'-deoxyribonucleoside 5'-triphosphate = DNA(n+1) + diphosphate. Catalytic component of the DNA polymerase epsilon complex. Participates in chromosomal DNA replication. Required during synthesis of the leading DNA strands at the replication fork and binds at/or near replication origins and moves along DNA with the replication fork. Has 3'-5' proofreading exonuclease activity that corrects errors arising during DNA replication. It is also involved in DNA synthesis during DNA repair. The polypeptide is DNA polymerase epsilon catalytic subunit A (Pole) (Mus musculus (Mouse)).